The primary structure comprises 606 residues: Transcription factor glial cells missing 2 (606 aa).

Positions 20 to 37 (DHSQLTQFVQPQSQSTHS) are enriched in polar residues. Disordered regions lie at residues 20–65 (DHSQ…KGKR), 475–501 (EMQQ…HHYY), and 561–606 (TAPT…SVTH). Low complexity predominate over residues 44-61 (PGQQQAGGSMTMPSSSTG). Positions 65–224 (REWDINDAIV…KNSSVSKRAF (160 aa)) form a DNA-binding region, GCM. Polar residues predominate over residues 490–501 (FGGNQTAGHHYY). The span at 569–580 (PGHPPPPPPPPT) shows a compositional bias: pro residues. The span at 583–593 (YHHHHHHHLHH) shows a compositional bias: basic residues. Residues 594–606 (PAAATGLAPSVTH) are compositionally biased toward low complexity.

As to expression, expressed in glial lineages within embryonic procephalic mesoderm. Expression is highest in hemocyte primordia and longitudinal and nerve root ganglia.

It is found in the nucleus. Transcription factor with a minor role promoting glial cell differentiation and a more significant role in hematocyte differentiation. Gcm2, together with gcm, is required for the proliferation of plasmatocyte precursors, the expression of Croquemort protein, and the ability of plasmatocytes to convert into macrophages. In Drosophila melanogaster (Fruit fly), this protein is Transcription factor glial cells missing 2 (gcm2).